Consider the following 459-residue polypeptide: MSADQEAKEDELLALASIYDEEEFHRAESGKEGEIHLCLELPPNFKLLVKGQKSAEHNISFLPPLVLSFDLPDDYPSTSAPIFTISSKWLTRVQITALCRKLDELWEENQGNVVLFTWIQFLKEETLDFLGIQSPLEIQRSGSQPQCEPAQKHAADASGEKSKVQDLDPRAVQEVDAQTDILTQLLDFDEAQKQRVFDGKAFCCGICYSEKLGCDCLLFKECEHVYCKACIKEYFQIQIKDGKVQCLNCPEPKCASTATPTQVKLLVGEDEFARYDRLLLQSSLDLMADVVYCPRMSCCMAVMVEPDSTMGICPSCRYAFCTLCRRSYHGLSHCIATADELRSLRDEYLSSSEEGKKFLEKRFGKRVIQRAVEESFSTDWLKTNCKQCPCCGTNIQKAHGCNKMTCSSCQKYFCWICLGALSRVNPYSHFNNPDSPCYNQLFHGMEMEEDEAFGSDEDD.

Positions 10–129 constitute an RWD domain; that stretch reads DELLALASIY…QFLKEETLDF (120 aa). A disordered region spans residues 141 to 169; the sequence is SGSQPQCEPAQKHAADASGEKSKVQDLDP. Positions 150-169 are enriched in basic and acidic residues; that stretch reads AQKHAADASGEKSKVQDLDP. The interval 200–441 is TRIAD supradomain; it reads KAFCCGICYS…NPDSPCYNQL (242 aa). Residues Cys-204, Cys-207, Cys-222, His-224, Cys-227, Cys-230, Cys-249, Cys-254, Cys-293, Cys-298, Cys-313, Cys-316, Cys-321, Cys-324, His-329, Cys-334, Cys-388, and Cys-391 each contribute to the Zn(2+) site. 2 consecutive RING-type zinc fingers follow at residues 204–249 and 204–254; these read CGIC…CLNC and CGIC…EPKC. An IBR-type zinc finger spans residues 273–334; sequence ARYDRLLLQS…RRSYHGLSHC (62 aa). The RING-type 2; atypical zinc finger occupies 388-417; sequence CPCCGTNIQKAHGCNKMTCSSCQKYFCWIC. The active site involves Cys-401. Zn(2+) contacts are provided by Cys-406, Cys-409, Cys-414, Cys-417, His-429, and Cys-437.

The protein belongs to the RBR family. RNF14 subfamily.

The protein localises to the cytoplasm. Its subcellular location is the nucleus. It catalyses the reaction [E2 ubiquitin-conjugating enzyme]-S-ubiquitinyl-L-cysteine + [acceptor protein]-L-lysine = [E2 ubiquitin-conjugating enzyme]-L-cysteine + [acceptor protein]-N(6)-ubiquitinyl-L-lysine.. It participates in protein modification; protein ubiquitination. Functionally, E3 ubiquitin-protein ligase that plays a key role in the RNF14-RNF25 translation quality control pathway, a pathway that takes place when a ribosome has stalled during translation, and which promotes ubiquitination and degradation of translation factors on stalled ribosomes. Recruited to stalled ribosomes by the ribosome collision sensor GCN1 and mediates 'Lys-6'-linked ubiquitination of target proteins, leading to their degradation. Mediates ubiquitination of eef1a1/eEF1A and etf1/eRF1 translation factors on stalled ribosomes, leading to their degradation. Specifically required to resolve RNA-protein cross-links caused by reactive aldehydes, which trigger translation stress by stalling ribosomes: acts by catalying 'Lys-6'-linked ubiquitination of RNA-protein cross-links, leading to their removal by the ATP-dependent unfoldase VCP and subsequent degradation by the proteasome. Independently of its function in the response to stalled ribosomes, acts as a regulator of transcription in Wnt signaling via its interaction with TCF transcription factors (tcf7/tcf1, tcf7l1/tcf3 and tcf7l2/tcf4). In Danio rerio (Zebrafish), this protein is E3 ubiquitin-protein ligase RNF14.